An 85-amino-acid chain; its full sequence is Thioredoxin (85 aa).

Positions 1 to 85 (MSKVKIELFT…ALVEAIKKRL (85 aa)) constitute a Glutaredoxin domain. The cysteines at positions 14 and 17 are disulfide-linked.

The protein belongs to the glutaredoxin family.

It is found in the cytoplasm. Functionally, acts to maintain redox homeostasis; functions as a protein disulfide reductase. In Methanocaldococcus jannaschii (strain ATCC 43067 / DSM 2661 / JAL-1 / JCM 10045 / NBRC 100440) (Methanococcus jannaschii), this protein is Thioredoxin (trx).